The chain runs to 294 residues: tRNA dimethylallyltransferase (294 aa).

Residue 10–17 (GPTAVGKT) participates in ATP binding. 12–17 (TAVGKT) is a substrate binding site. The tract at residues 35–38 (DSQQ) is interaction with substrate tRNA.

It belongs to the IPP transferase family. In terms of assembly, monomer. Requires Mg(2+) as cofactor.

It carries out the reaction adenosine(37) in tRNA + dimethylallyl diphosphate = N(6)-dimethylallyladenosine(37) in tRNA + diphosphate. In terms of biological role, catalyzes the transfer of a dimethylallyl group onto the adenine at position 37 in tRNAs that read codons beginning with uridine, leading to the formation of N6-(dimethylallyl)adenosine (i(6)A). This chain is tRNA dimethylallyltransferase, found in Streptococcus pneumoniae (strain Hungary19A-6).